We begin with the raw amino-acid sequence, 335 residues long: MRMKKTVAVIGAGNVGEHVASLILLKNLANVKMFDLPRKTEEKVFEPVKGKALDMKQMLAAMDIDARVEGYTVTPEGEGYEPLEGSDIVVITAGFPRRPGMSREDLLEANIRIISVIADRIKRYAPDAIVIVVTNPVDVMTYVAYKLLNFPKNRVMGMAGVLDSARFKTFISEELMVSPKDIHAYVIGGHGDEMVPLISISNVGGIPLKDLLPKEKLEKIIERTRFGGGEIVNLMGTSAYYAPAAAIVDMIEALVQNSKRILPCSVYLDGEAGEYYGVQGFCVGVPVKLGSNGVEEIIKVPMIEEEREMWRRSVESVKKTVEVAEGILSAGSSRQ.

NAD(+)-binding positions include 11–16 (GAGNVG) and aspartate 35. Substrate-binding residues include arginine 97 and arginine 103. NAD(+) is bound by residues asparagine 110 and 133–135 (VTN). The substrate site is built by asparagine 135 and arginine 166. Histidine 190 acts as the Proton acceptor in catalysis.

Belongs to the LDH/MDH superfamily. MDH type 3 family.

It catalyses the reaction (S)-malate + NAD(+) = oxaloacetate + NADH + H(+). In terms of biological role, catalyzes the reversible oxidation of malate to oxaloacetate. This is Malate dehydrogenase 1 (mdh1) from Aquifex aeolicus (strain VF5).